Reading from the N-terminus, the 268-residue chain is Single-stranded DNA-binding protein WHY3, chloroplastic (268 aa).

The N-terminal 75 residues, 1 to 75 (MSQLLSSPPM…KQRFGDSSSS (75 aa)), are a transit peptide targeting the chloroplast. A required for ssDNA binding region spans residues 93–98 (KGKAAL). The Nuclear localization signal signature appears at 171-185 (KGKGSDEGKVRKVLK).

Belongs to the Whirly family. Homotetramer.

It is found in the plastid. The protein localises to the chloroplast. It localises to the nucleus. In terms of biological role, single-stranded DNA-binding protein that functions in both chloroplasts and nucleus. In chloroplasts, maintains plastid genome stability by preventing break-induced and short homology-dependent illegitimate recombinations. In the nucleus, is recruited to a distal element upstream of the kinesin KP1 to mediate the transcriptional repression of KP1. Can bind double-stranded DNA in vivo. This Arabidopsis thaliana (Mouse-ear cress) protein is Single-stranded DNA-binding protein WHY3, chloroplastic (WHY3).